Reading from the N-terminus, the 185-residue chain is Ribosome-recycling factor (185 aa).

This sequence belongs to the RRF family.

It is found in the cytoplasm. In terms of biological role, responsible for the release of ribosomes from messenger RNA at the termination of protein biosynthesis. May increase the efficiency of translation by recycling ribosomes from one round of translation to another. The sequence is that of Ribosome-recycling factor from Bacillus cereus (strain B4264).